A 1268-amino-acid chain; its full sequence is Vigilin (1268 aa).

Ser-2 bears the N-acetylserine mark. The residue at position 8 (Thr-8) is a Phosphothreonine. A phosphoserine mark is found at Ser-11, Ser-31, and Ser-35. 7 consecutive KH domains span residues Gln-150–Val-212, Arg-222–Ile-284, Thr-295–Val-357, Phe-364–Ile-424, Met-435–Leu-497, Glu-507–Met-570, and Ser-581–Ile-643. A phosphothreonine mark is found at Thr-295 and Thr-296. A Phosphoserine modification is found at Ser-317. The residue at position 437 (Tyr-437) is a Phosphotyrosine. Ser-645 carries the phosphoserine modification. KH domains follow at residues Ile-653–Leu-716, Ser-727–Leu-790, Val-800–Ile-863, Gln-873–Leu-967, Pro-972–Leu-1034, Ser-1052–Ile-1117, and Met-1127–Ile-1190. Positions Pro-910–Arg-946 are disordered. The span at Gly-932–Arg-946 shows a compositional bias: basic and acidic residues. Lys-991 is modified (N6-acetyllysine). Residues Pro-1214–Arg-1268 are disordered. A compositionally biased stretch (polar residues) spans Trp-1233–Glu-1249. Ser-1247 is subject to Phosphoserine.

It localises to the cytoplasm. The protein localises to the nucleus. Appears to play a role in cell sterol metabolism. It may function to protect cells from over-accumulation of cholesterol. This chain is Vigilin (Hdlbp), found in Rattus norvegicus (Rat).